The primary structure comprises 424 residues: GTPase Obg (424 aa).

In terms of domain architecture, Obg spans 1-158 (MFIDTAKIFV…RWIKLELKLL (158 aa)). The OBG-type G domain maps to 159 to 331 (ADVGLIGFPN…LMKEAARLLS (173 aa)). Residues 165–172 (GFPNVGKS), 190–194 (FTTLK), 212–215 (DIPG), 282–285 (NKSD), and 312–314 (SAA) contribute to the GTP site. Mg(2+) is bound by residues S172 and T192. The 80-residue stretch at 345–424 (RFIEEEKRFT…LNDFEFDFLL (80 aa)) folds into the OCT domain.

The protein belongs to the TRAFAC class OBG-HflX-like GTPase superfamily. OBG GTPase family. As to quaternary structure, monomer. Requires Mg(2+) as cofactor.

It localises to the cytoplasm. Its function is as follows. An essential GTPase which binds GTP, GDP and possibly (p)ppGpp with moderate affinity, with high nucleotide exchange rates and a fairly low GTP hydrolysis rate. Plays a role in control of the cell cycle, stress response, ribosome biogenesis and in those bacteria that undergo differentiation, in morphogenesis control. The chain is GTPase Obg from Clostridium botulinum (strain Okra / Type B1).